The following is a 583-amino-acid chain: Lamin-B3 (583 aa).

A disordered region spans residues 1-30; it reads MATSTPSRAREHASAAQSPGSPTRISRMQE. The segment at 2 to 32 is head; it reads ATSTPSRAREHASAAQSPGSPTRISRMQEKE. Positions 15–26 are enriched in polar residues; sequence AAQSPGSPTRIS. Ser21 is modified (phosphoserine). Positions 30–386 constitute an IF rod domain; the sequence is EKEDLRHLND…KMLEGEEQRL (357 aa). A coil 1A region spans residues 33–67; that stretch reads DLRHLNDRLAAYIERVRSLEADKSLLKIQLEEREE. The linker 1 stretch occupies residues 68-79; it reads VSSREVTNLRQL. Positions 80–215 are coil 1B; it reads YETELADARK…QKNIHTQEVK (136 aa). The tract at residues 216–242 is linker 2; the sequence is EIKKRHDTRIVEIDSGRRVEFESKLAE. A coil 2 region spans residues 243–384; that stretch reads ALQELRRDHE…YRKMLEGEEQ (142 aa). The tract at residues 383–431 is disordered; it reads EQRLKLSPSPSQRSTVSRASTSQTSRLLRGKKRKLDETGRSVTKRSYKV. The tract at residues 385 to 580 is tail; that stretch reads RLKLSPSPSQ…QSHQSVDPSC (196 aa). A compositionally biased stretch (polar residues) spans 390 to 408; the sequence is PSPSQRSTVSRASTSQTSR. At Ser391 the chain carries Phosphoserine. The LTD domain occupies 429–546; it reads YKVVQQASST…EECAERTLYR (118 aa). The residue at position 580 (Cys580) is a Cysteine methyl ester. Cys580 is lipidated: S-farnesyl cysteine. A propeptide spans 581 to 583 (removed in mature form); that stretch reads SIM.

The protein belongs to the intermediate filament family. Post-translationally, phosphorylation plays a key role in lamin organization, subcellular localization and nuclear envelope disintegration. Phosphorylation by CDK1 at Ser-21 at the onset of mitosis drives lamin disassembly and nuclear envelope breakdown.

The protein localises to the nucleus lamina. Its subcellular location is the nucleus envelope. It is found in the nucleus. The protein resides in the nucleoplasm. It localises to the nucleus matrix. Functionally, lamins are intermediate filament proteins that assemble into a filamentous meshwork, and which constitute the major components of the nuclear lamina, a fibrous layer on the nucleoplasmic side of the inner nuclear membrane. Lamins provide a framework for the nuclear envelope, bridging the nuclear envelope and chromatin, thereby playing an important role in nuclear assembly, chromatin organization, nuclear membrane and telomere dynamics. The structural integrity of the lamina is strictly controlled by the cell cycle, as seen by the disintegration and formation of the nuclear envelope in prophase and telophase, respectively. The chain is Lamin-B3 (lmnb3.L) from Xenopus laevis (African clawed frog).